A 4555-amino-acid polypeptide reads, in one-letter code: Protocadherin Fat 3 (4555 aa).

The N-terminal stretch at 1 to 31 is a signal peptide; sequence MSVTMGHCMGTKPPSCIILLLLKLFATVSQG. The Extracellular portion of the chain corresponds to 32–4153; that stretch reads LPGTGPLGFH…AGHSYVGKEE (4122 aa). Cadherin domains follow at residues 43-157, 158-262, 263-374, 376-471, 472-577, 578-680, 726-830, 831-935, 936-1042, 1043-1147, 1148-1253, 1254-1358, 1362-1459, 1460-1565, 1566-1768, 1769-1882, 1883-1985, 1982-2083, 2084-2185, 2186-2286, 2287-2393, 2394-2495, 2496-2599, 2600-2707, 2708-2813, 2814-2923, 2924-3028, 3029-3130, 3131-3235, 3236-3340, 3341-3445, 3446-3550, and 3551-3660; these read THST…RPLF, SPTT…NEHA, PIIH…TPVR, EKDV…TPEF, QEAL…SPLF, EKVA…SKSF, KSFP…NPVF, LQDS…SPAF, IPSS…TPYF, PDFA…APLT, SEPI…RPQF, PEKV…SPIP, DEPF…GPEF, SQPH…SPYF, TNPL…PPVF, LFSQ…PPVF, TQAV…TQSF, TQSF…SPVF, VGLP…MPVF, DKPF…PPVF, DQPT…PPVF, NQLI…SPAF, SQST…APQF, MTVE…LPSF, TQSQ…KPVF, ETST…APVF, AHEV…SPVC, DQVA…PPVF, SSNH…PPVF, ERRD…PPRF, SQDV…SPVF, TPAN…KPTA, and IPLE…PEDF. N-linked (GlcNAc...) asparagine glycosylation is present at asparagine 48. A glycan (N-linked (GlcNAc...) asparagine) is linked at asparagine 341. Asparagine 481, asparagine 562, asparagine 667, asparagine 799, asparagine 879, asparagine 898, and asparagine 1006 each carry an N-linked (GlcNAc...) asparagine glycan. Asparagine 1367 and asparagine 1429 each carry an N-linked (GlcNAc...) asparagine glycan. N-linked (GlcNAc...) asparagine glycosylation is present at asparagine 1751. Asparagine 1944, asparagine 1993, and asparagine 1996 each carry an N-linked (GlcNAc...) asparagine glycan. 4 N-linked (GlcNAc...) asparagine glycosylation sites follow: asparagine 2208, asparagine 2292, asparagine 2331, and asparagine 2467. The N-linked (GlcNAc...) asparagine glycan is linked to asparagine 2734. Asparagine 3000 carries an N-linked (GlcNAc...) asparagine glycan. Asparagine 3201 carries an N-linked (GlcNAc...) asparagine glycan. N-linked (GlcNAc...) asparagine glycans are attached at residues asparagine 3449, asparagine 3618, and asparagine 3741. The EGF-like 1 domain occupies 3794-3832; it reads SNDPCVEKPCPEDMQCVGYEASRRPFLCQCPPGKLGECS. Cystine bridges form between cysteine 3798–cysteine 3809, cysteine 3803–cysteine 3821, and cysteine 3823–cysteine 3831. In terms of domain architecture, Laminin G-like spans 3834–4017; sequence HTSLSFAGNS…VGLTELKLGC (184 aa). N-linked (GlcNAc...) asparagine glycosylation occurs at asparagine 3926. Intrachain disulfides connect cysteine 3984–cysteine 4017, cysteine 4024–cysteine 4035, cysteine 4029–cysteine 4045, cysteine 4047–cysteine 4056, cysteine 4063–cysteine 4074, cysteine 4068–cysteine 4083, cysteine 4085–cysteine 4094, cysteine 4101–cysteine 4112, cysteine 4106–cysteine 4121, and cysteine 4123–cysteine 4132. 2 consecutive EGF-like domains span residues 4020 to 4057 and 4059 to 4095; these read YPDA…TNCE and EITA…VTCE. The 37-residue stretch at 4097–4133 folds into the EGF-like 4; calcium-binding domain; sequence DVDECEREECENGGSCVNLFGSFFCNCTPGYVGQYCG. Residues 4154-4174 traverse the membrane as a helical segment; the sequence is LIGIAVVLFVIFTLIVLFIVF. The Cytoplasmic segment spans residues 4175 to 4555; the sequence is RKKVFRKNYS…FVETQQQTQV (381 aa). Disordered stretches follow at residues 4300-4353 and 4395-4474; these read IRKN…YHWD and GGYD…LGGP. A compositionally biased stretch (polar residues) spans 4322–4343; it reads CFTNSNKGSNSEVQSLSSFQSD. Omega-N-methylarginine occurs at positions 4508 and 4518.

Restricted to the nervous system, mainly in brain. In brain, it is highly expressed in the olfactory bulb and retina. In the developing olfactory bulb, it localizes along the dendrites of these cells as well as in their axons to some extent. In retina, it cocentrates in the inner plexiform layer throughout development (at protein level).

Its subcellular location is the membrane. In terms of biological role, may play a role in the interactions between neurites derived from specific subsets of neurons during development. In Mus musculus (Mouse), this protein is Protocadherin Fat 3 (Fat3).